Here is a 482-residue protein sequence, read N- to C-terminus: Pentatricopeptide repeat-containing protein At1g74900, mitochondrial (482 aa).

PPR repeat units lie at residues Asp90–Pro124, Ser125–Gln159, Asp160–Arg190, Asp194–Pro228, Asn229–Ile263, Asp264–Pro298, Ser299–Pro333, Asn334–Pro368, Asn369–Pro403, Asn404–Pro441, and Arg442–Leu476.

The protein belongs to the PPR family. P subfamily.

It is found in the mitochondrion. In terms of biological role, required for the trans-splicing of intron 1 of the mitochondrial nad1 transcript encoding the ND1 subunit of the mitochondrial membrane respiratory chain NADH dehydrogenase (Complex I). The sequence is that of Pentatricopeptide repeat-containing protein At1g74900, mitochondrial (OTP43) from Arabidopsis thaliana (Mouse-ear cress).